A 248-amino-acid chain; its full sequence is Adenosylcobinamide-GDP ribazoletransferase (248 aa).

Helical transmembrane passes span 24-44 (EVNL…IGAW), 47-67 (LVFT…AGLF), 70-90 (IIIT…GLFS), 106-126 (VGAN…ALFL), 134-154 (IGWL…LLFA), 165-185 (LGSI…LFVL), 186-206 (FILG…VILF), and 228-248 (AGGQ…WGLI).

This sequence belongs to the CobS family. Requires Mg(2+) as cofactor.

It localises to the cell membrane. It catalyses the reaction alpha-ribazole + adenosylcob(III)inamide-GDP = adenosylcob(III)alamin + GMP + H(+). The catalysed reaction is alpha-ribazole 5'-phosphate + adenosylcob(III)inamide-GDP = adenosylcob(III)alamin 5'-phosphate + GMP + H(+). Its pathway is cofactor biosynthesis; adenosylcobalamin biosynthesis; adenosylcobalamin from cob(II)yrinate a,c-diamide: step 7/7. Functionally, joins adenosylcobinamide-GDP and alpha-ribazole to generate adenosylcobalamin (Ado-cobalamin). Also synthesizes adenosylcobalamin 5'-phosphate from adenosylcobinamide-GDP and alpha-ribazole 5'-phosphate. In Listeria welshimeri serovar 6b (strain ATCC 35897 / DSM 20650 / CCUG 15529 / CIP 8149 / NCTC 11857 / SLCC 5334 / V8), this protein is Adenosylcobinamide-GDP ribazoletransferase.